A 388-amino-acid polypeptide reads, in one-letter code: Nocturnin (388 aa).

Glu152 contacts Mg(2+). Residues Glu152, Lys176–Trp178, Asn220, His243–Ala246, Asp281–Asn283, and His371 each bind substrate.

Belongs to the CCR4/nocturin family. Requires Mg(2+) as cofactor. In terms of tissue distribution, expressed only in the photoreceptors of the retina. Expression is controlled by the retinal circadian clock.

Its subcellular location is the cytoplasm. It is found in the nucleus. It localises to the perinuclear region. The protein localises to the mitochondrion. The enzyme catalyses NADP(+) + H2O = phosphate + NAD(+). The catalysed reaction is NADPH + H2O = phosphate + NADH. Functionally, phosphatase which catalyzes the conversion of NADP(+) to NAD(+) and of NADPH to NADH. Shows a small preference for NADPH over NADP(+). Component of the circadian clock or downstream effector of clock function. Exhibits a high amplitude circadian rhythm with maximal levels in early evening. In constant darkness or constant light, the amplitude of the rhythm decreases. The chain is Nocturnin from Xenopus laevis (African clawed frog).